The primary structure comprises 428 residues: Folylpolyglutamate synthase (428 aa).

49 to 52 contributes to the ATP binding site; that stretch reads GKGS. A Mg(2+)-binding site is contributed by Ser-73. (6R)-5,10-methylenetetrahydrofolyl-(gamma-L-Glu)n is bound by residues Phe-75 and Arg-82. 2 residues coordinate Mg(2+): Glu-143 and His-170. At Lys-185 the chain carries N6-carboxylysine. Residues Asn-264, Arg-300, and 313–316 contribute to the ATP site; that span reads DGAH. Ser-417 lines the (6R)-5,10-methylenetetrahydrofolyl-(gamma-L-Glu)n pocket.

This sequence belongs to the folylpolyglutamate synthase family. Monomer. Requires Mg(2+) as cofactor.

It carries out the reaction (6S)-5,6,7,8-tetrahydrofolyl-(gamma-L-Glu)(n) + L-glutamate + ATP = (6S)-5,6,7,8-tetrahydrofolyl-(gamma-L-Glu)(n+1) + ADP + phosphate + H(+). The catalysed reaction is (6R)-5,10-methylenetetrahydrofolyl-(gamma-L-Glu)(n) + L-glutamate + ATP = (6R)-5,10-methylenetetrahydrofolyl-(gamma-L-Glu)(n+1) + ADP + phosphate + H(+). The enzyme catalyses 10-formyltetrahydrofolyl-(gamma-L-Glu)(n) + L-glutamate + ATP = 10-formyltetrahydrofolyl-(gamma-L-Glu)(n+1) + ADP + phosphate + H(+). Its activity is regulated as follows. Competitively inhibited by adenosine 5'-(3-thio)triphosphate and beta,gamma-methylene-ATP. Functionally, involved in the conversion of folates to polyglutamate derivatives, and likely functions in the retention of cellular folate pools. Catalyzes successive MgATP-dependent additions of glutamate to a pteroylmonoglutamate substrate, with a high preference for 5,10-methylenetetrahydrofolate (mTHF). Thus, metabolizes mTHF to the tetraglutamate derivative, but longer glutamate chain length products are not observed. Tetrahydrofolate (H4PteGlu) and 10-formyl-H4PteGlu are poorer folate substrates. In contrast to E.coli FolC, this enzyme does not display dihydrofolate synthase activity. This Lacticaseibacillus casei (Lactobacillus casei) protein is Folylpolyglutamate synthase.